The sequence spans 412 residues: Proteasome-activating nucleotidase (412 aa).

The stretch at 15–73 (EDIYQYLLERITNLENRNLELREQFRQMESEKRYVETQKIRYERELRKLKSEIEQLRSP) forms a coiled coil. ATP is bound by residues 197–202 (GTGKTL) and His336. The segment at 410–412 (MFA) is docks into pockets in the proteasome alpha-ring to cause gate opening.

Belongs to the AAA ATPase family. Homohexamer. The hexameric complex has a two-ring architecture resembling a top hat that caps the 20S proteasome core at one or both ends. Upon ATP-binding, the C-terminus of PAN interacts with the alpha-rings of the proteasome core by binding to the intersubunit pockets.

It localises to the cytoplasm. Functionally, ATPase which is responsible for recognizing, binding, unfolding and translocation of substrate proteins into the archaeal 20S proteasome core particle. Is essential for opening the gate of the 20S proteasome via an interaction with its C-terminus, thereby allowing substrate entry and access to the site of proteolysis. Thus, the C-termini of the proteasomal ATPase function like a 'key in a lock' to induce gate opening and therefore regulate proteolysis. Unfolding activity requires energy from ATP hydrolysis, whereas ATP binding alone promotes ATPase-20S proteasome association which triggers gate opening, and supports translocation of unfolded substrates. This Methanoculleus marisnigri (strain ATCC 35101 / DSM 1498 / JR1) protein is Proteasome-activating nucleotidase.